A 126-amino-acid chain; its full sequence is E3 ubiquitin-protein ligase PPP1R11 (126 aa).

The disordered stretch occupies residues 1-25; sequence MAEAGAGLSETVTETTVTVTTEPEN. N-acetylalanine is present on Ala2. The span at 10-22 shows a compositional bias: low complexity; it reads ETVTETTVTVTTE. The segment at 52–62 is atypical RING finger domain 1; it reads HMGRRSSKCCC. The segment at 70–126 is disordered; the sequence is FGESSTESDEEEEEGCGHTHCVRGHRKGRRRATLGPTPTTPPQPPDPSQPPPGPMQH. Phosphoserine is present on residues Ser73 and Ser74. Thr75 is subject to Phosphothreonine. Position 77 is a phosphoserine (Ser77). An atypical RING finger domain 2 region spans residues 85-94; that stretch reads CGHTHCVRGH. The span at 89–101 shows a compositional bias: basic residues; the sequence is HCVRGHRKGRRRA. A compositionally biased stretch (pro residues) spans 107–126; that stretch reads PTTPPQPPDPSQPPPGPMQH. Thr109 is subject to Phosphothreonine.

Interacts with TLR2 and UBE2D2. Post-translationally, auto-ubiquitinated. Widely expressed.

It catalyses the reaction S-ubiquitinyl-[E2 ubiquitin-conjugating enzyme]-L-cysteine + [acceptor protein]-L-lysine = [E2 ubiquitin-conjugating enzyme]-L-cysteine + N(6)-ubiquitinyl-[acceptor protein]-L-lysine.. Its pathway is protein modification; protein ubiquitination. Its function is as follows. Atypical E3 ubiquitin-protein ligase which ubiquitinates TLR2 at 'Lys-754' leading to its degradation by the proteasome. Plays a role in regulating inflammatory cytokine release and gram-positive bacterial clearance by functioning, in part, through the ubiquitination and degradation of TLR2. Inhibitor of protein phosphatase 1. In Homo sapiens (Human), this protein is E3 ubiquitin-protein ligase PPP1R11 (PPP1R11).